Reading from the N-terminus, the 208-residue chain is Small ribosomal subunit protein uS4 (208 aa).

In terms of domain architecture, S4 RNA-binding spans 98-160; sequence RRLDNVVYRL…SKSKTRFVEI (63 aa).

It belongs to the universal ribosomal protein uS4 family. Part of the 30S ribosomal subunit. Contacts protein S5. The interaction surface between S4 and S5 is involved in control of translational fidelity.

Its function is as follows. One of the primary rRNA binding proteins, it binds directly to 16S rRNA where it nucleates assembly of the body of the 30S subunit. With S5 and S12 plays an important role in translational accuracy. This chain is Small ribosomal subunit protein uS4, found in Caldicellulosiruptor bescii (strain ATCC BAA-1888 / DSM 6725 / KCTC 15123 / Z-1320) (Anaerocellum thermophilum).